We begin with the raw amino-acid sequence, 210 residues long: Replication protein RepB (210 aa).

It belongs to the Gram-positive plasmids replication protein type 2 family.

Functionally, is essential for plasmid replication. Nicks the positive strand at the plus origin of replication. This Streptococcus agalactiae protein is Replication protein RepB (repB).